A 397-amino-acid polypeptide reads, in one-letter code: ATP-dependent RNA helicase eIF4A (397 aa).

A Q motif motif is present at residues 24–52 (DSFDDMNLKSELLRGIYAYGFERPSAIQQ). A Helicase ATP-binding domain is found at 55 to 225 (IMPVIKGHDV…TKFMRDPVRI (171 aa)). Residue 68–75 (AQSGTGKT) participates in ATP binding. The DEAD box motif lies at 173–176 (DEAD). The Helicase C-terminal domain occupies 236 to 397 (GIKQFYIAVE…EMPMNVADLI (162 aa)).

This sequence belongs to the DEAD box helicase family. eIF4A subfamily. Component of the eIF4F complex, which composition varies with external and internal environmental conditions. It is composed of at least eIF4A, eIF4E and eIF4G.

Its subcellular location is the cytoplasm. The catalysed reaction is ATP + H2O = ADP + phosphate + H(+). Functionally, ATP-dependent RNA helicase which is a subunit of the eIF4F complex involved in cap recognition and is required for mRNA binding to ribosome. In the current model of translation initiation, eIF4A unwinds RNA secondary structures in the 5'-UTR of mRNAs which is necessary to allow efficient binding of the small ribosomal subunit, and subsequent scanning for the initiator codon. In Chaetomium globosum (strain ATCC 6205 / CBS 148.51 / DSM 1962 / NBRC 6347 / NRRL 1970) (Soil fungus), this protein is ATP-dependent RNA helicase eIF4A (TIF1).